We begin with the raw amino-acid sequence, 249 residues long: 1-(5-phosphoribosyl)-5-[(5-phosphoribosylamino)methylideneamino] imidazole-4-carboxamide isomerase (249 aa).

D11 functions as the Proton acceptor in the catalytic mechanism. D132 acts as the Proton donor in catalysis.

It belongs to the HisA/HisF family.

It localises to the cytoplasm. It catalyses the reaction 1-(5-phospho-beta-D-ribosyl)-5-[(5-phospho-beta-D-ribosylamino)methylideneamino]imidazole-4-carboxamide = 5-[(5-phospho-1-deoxy-D-ribulos-1-ylimino)methylamino]-1-(5-phospho-beta-D-ribosyl)imidazole-4-carboxamide. It functions in the pathway amino-acid biosynthesis; L-histidine biosynthesis; L-histidine from 5-phospho-alpha-D-ribose 1-diphosphate: step 4/9. In Nitrobacter winogradskyi (strain ATCC 25391 / DSM 10237 / CIP 104748 / NCIMB 11846 / Nb-255), this protein is 1-(5-phosphoribosyl)-5-[(5-phosphoribosylamino)methylideneamino] imidazole-4-carboxamide isomerase.